Consider the following 207-residue polypeptide: MTHPDQKPWILGLTGGIGSGKSAAAQCFIDLGIDTVDADHAARWVVEPGRPALEQIATHFGNGVLQASGALDRGALRKLIFENPEQRRWLEALLHPLINQEIVSHLAKAKSPYAILVSPLLIESGQSRMVQRLLVIDVPQQVQIERTMLRDSSSQEQVEAILKVQIQREDRLRHADDVLVNDRDHAWLNSEVERLHHFYLTLRGGQS.

Residues 10–207 enclose the DPCK domain; that stretch reads ILGLTGGIGS…FYLTLRGGQS (198 aa). 18–23 is a binding site for ATP; it reads GSGKSA.

Belongs to the CoaE family.

Its subcellular location is the cytoplasm. The enzyme catalyses 3'-dephospho-CoA + ATP = ADP + CoA + H(+). Its pathway is cofactor biosynthesis; coenzyme A biosynthesis; CoA from (R)-pantothenate: step 5/5. Its function is as follows. Catalyzes the phosphorylation of the 3'-hydroxyl group of dephosphocoenzyme A to form coenzyme A. The chain is Dephospho-CoA kinase from Pseudomonas syringae pv. tomato (strain ATCC BAA-871 / DC3000).